Consider the following 201-residue polypeptide: L(+)-tartrate dehydratase subunit beta (201 aa).

The active site involves His37.

Belongs to the class-I fumarase family. Heterotetramer of two alpha and two beta subunits.

The enzyme catalyses (2R,3R)-tartrate = oxaloacetate + H2O. This chain is L(+)-tartrate dehydratase subunit beta (ttdB), found in Shigella sonnei (strain Ss046).